Consider the following 133-residue polypeptide: MARVKRGVTAHAKHKKVLKQAEGFYGRRKNTIRAAKAAVDRSKQYAYRDRKNRKRTFRALWIQRINAAVRAEGLTYGRFIDGLSKAGIEVDRKVLSDIAIYEAEAFSALVASAKKALEYLKDTTPNAFEGAVK.

This sequence belongs to the bacterial ribosomal protein bL20 family.

Functionally, binds directly to 23S ribosomal RNA and is necessary for the in vitro assembly process of the 50S ribosomal subunit. It is not involved in the protein synthesizing functions of that subunit. This Bartonella tribocorum (strain CIP 105476 / IBS 506) protein is Large ribosomal subunit protein bL20.